The sequence spans 234 residues: Endonuclease V (234 aa).

2 residues coordinate Mg(2+): Asp-42 and Asp-108.

It belongs to the endonuclease V family. It depends on Mg(2+) as a cofactor.

Its subcellular location is the cytoplasm. The catalysed reaction is Endonucleolytic cleavage at apurinic or apyrimidinic sites to products with a 5'-phosphate.. DNA repair enzyme involved in the repair of deaminated bases. Selectively cleaves double-stranded DNA at the second phosphodiester bond 3' to a deoxyinosine leaving behind the intact lesion on the nicked DNA. This chain is Endonuclease V, found in Geotalea uraniireducens (strain Rf4) (Geobacter uraniireducens).